A 273-amino-acid chain; its full sequence is Vitamin B12-binding protein (273 aa).

Positions 1–18 are cleaved as a signal peptide; that stretch reads MMKTLSSLLLLFSVSLQA. The Fe/B12 periplasmic-binding domain occupies 23–273; it reads RVISLAPHAT…EHFASIEQKR (251 aa). The cysteines at positions 183 and 263 are disulfide-linked.

It belongs to the BtuF family. The complex is composed of two ATP-binding proteins (BtuD), two transmembrane proteins (BtuC) and a solute-binding protein (BtuF).

The protein resides in the periplasm. Functionally, part of the ABC transporter complex BtuCDF involved in vitamin B12 import. Binds vitamin B12 and delivers it to the periplasmic surface of BtuC. In Vibrio vulnificus (strain YJ016), this protein is Vitamin B12-binding protein.